The sequence spans 312 residues: Ribosomal RNA small subunit methyltransferase H (312 aa).

Residues 34–36, Asp54, Leu83, Asp99, and Gln106 each bind S-adenosyl-L-methionine; that span reads GGH.

The protein belongs to the methyltransferase superfamily. RsmH family.

It is found in the cytoplasm. It catalyses the reaction cytidine(1402) in 16S rRNA + S-adenosyl-L-methionine = N(4)-methylcytidine(1402) in 16S rRNA + S-adenosyl-L-homocysteine + H(+). Functionally, specifically methylates the N4 position of cytidine in position 1402 (C1402) of 16S rRNA. The polypeptide is Ribosomal RNA small subunit methyltransferase H (Rubrobacter xylanophilus (strain DSM 9941 / JCM 11954 / NBRC 16129 / PRD-1)).